Here is a 227-residue protein sequence, read N- to C-terminus: Phosphoribosylformylglycinamidine synthase subunit PurQ (227 aa).

Residues 3–225 enclose the Glutamine amidotransferase type-1 domain; it reads FAVIVFPGSN…LKQWRETYVV (223 aa). Catalysis depends on C86, which acts as the Nucleophile. Active-site residues include H194 and E196.

Part of the FGAM synthase complex composed of 1 PurL, 1 PurQ and 2 PurS subunits.

It is found in the cytoplasm. It carries out the reaction N(2)-formyl-N(1)-(5-phospho-beta-D-ribosyl)glycinamide + L-glutamine + ATP + H2O = 2-formamido-N(1)-(5-O-phospho-beta-D-ribosyl)acetamidine + L-glutamate + ADP + phosphate + H(+). The catalysed reaction is L-glutamine + H2O = L-glutamate + NH4(+). Its pathway is purine metabolism; IMP biosynthesis via de novo pathway; 5-amino-1-(5-phospho-D-ribosyl)imidazole from N(2)-formyl-N(1)-(5-phospho-D-ribosyl)glycinamide: step 1/2. Its function is as follows. Part of the phosphoribosylformylglycinamidine synthase complex involved in the purines biosynthetic pathway. Catalyzes the ATP-dependent conversion of formylglycinamide ribonucleotide (FGAR) and glutamine to yield formylglycinamidine ribonucleotide (FGAM) and glutamate. The FGAM synthase complex is composed of three subunits. PurQ produces an ammonia molecule by converting glutamine to glutamate. PurL transfers the ammonia molecule to FGAR to form FGAM in an ATP-dependent manner. PurS interacts with PurQ and PurL and is thought to assist in the transfer of the ammonia molecule from PurQ to PurL. The chain is Phosphoribosylformylglycinamidine synthase subunit PurQ from Bacillus thuringiensis (strain Al Hakam).